The chain runs to 164 residues: Small ribosomal subunit protein uS5 (164 aa).

The S5 DRBM domain maps to 10–73 (LEERVVAINR…EAAKKNMIEV (64 aa)).

It belongs to the universal ribosomal protein uS5 family. As to quaternary structure, part of the 30S ribosomal subunit. Contacts proteins S4 and S8.

In terms of biological role, with S4 and S12 plays an important role in translational accuracy. Its function is as follows. Located at the back of the 30S subunit body where it stabilizes the conformation of the head with respect to the body. The polypeptide is Small ribosomal subunit protein uS5 (Streptococcus pyogenes serotype M1).